Reading from the N-terminus, the 549-residue chain is uncharacterized protein (549 aa).

Residues 1–19 (MNWRRIVWLLALVTLPTLA) form the signal peptide.

This is an uncharacterized protein from Escherichia coli (strain K12).